The primary structure comprises 521 residues: Bifunctional purine biosynthesis protein PurH (521 aa).

Residues 1 to 145 enclose the MGS-like domain; the sequence is MIKQALISVS…KNHRDVTVVV (145 aa).

The protein belongs to the PurH family.

The enzyme catalyses (6R)-10-formyltetrahydrofolate + 5-amino-1-(5-phospho-beta-D-ribosyl)imidazole-4-carboxamide = 5-formamido-1-(5-phospho-D-ribosyl)imidazole-4-carboxamide + (6S)-5,6,7,8-tetrahydrofolate. The catalysed reaction is IMP + H2O = 5-formamido-1-(5-phospho-D-ribosyl)imidazole-4-carboxamide. The protein operates within purine metabolism; IMP biosynthesis via de novo pathway; 5-formamido-1-(5-phospho-D-ribosyl)imidazole-4-carboxamide from 5-amino-1-(5-phospho-D-ribosyl)imidazole-4-carboxamide (10-formyl THF route): step 1/1. It functions in the pathway purine metabolism; IMP biosynthesis via de novo pathway; IMP from 5-formamido-1-(5-phospho-D-ribosyl)imidazole-4-carboxamide: step 1/1. The sequence is that of Bifunctional purine biosynthesis protein PurH from Paraburkholderia xenovorans (strain LB400).